The primary structure comprises 247 residues: MFAKSFPLNPFLESVADRIRERVKGLTGVESLELAPDLKNIYGKTDGEDFFIFNELHQSRGFRKLHIETAVFEPSLEILHVVFFPDPAFDLPIFGVDLIAVPQGISAAIVDLSPVRDKLPRTIENQLAQIEIPSFEKVRKLPDWGDIFSSHVQFITPIGAEENGFFLDLVDKFLTILIDYSESIEPDLDDSPFTIERIEGQMYYCLQQKQNDKTRNVLAKAFSPNWANQYIEMVLFDMPVHTKNLDN.

The protein belongs to the HY2 family.

It catalyses the reaction (2R,3Z)-phycocyanobilin + 4 oxidized [2Fe-2S]-[ferredoxin] = biliverdin IXalpha + 4 reduced [2Fe-2S]-[ferredoxin] + 4 H(+). In terms of biological role, catalyzes the four-electron reduction of biliverdin IX-alpha (2-electron reduction at both the A and D rings); the reaction proceeds via an isolatable 2-electron intermediate, 181,182-dihydrobiliverdin. The protein is Phycocyanobilin:ferredoxin oxidoreductase (pcyA) of Prochlorococcus marinus (strain SARG / CCMP1375 / SS120).